Reading from the N-terminus, the 144-residue chain is Glutamyl-tRNA(Gln) amidotransferase subunit C, mitochondrial (144 aa).

The transit peptide at 1-17 (MFRRSVSFVRSHVLRSF) directs the protein to the mitochondrion.

The protein belongs to the GatC family. In terms of assembly, subunit of the heterotrimeric GatCAB amidotransferase (AdT) complex, composed of A, B and C subunits.

The protein resides in the mitochondrion. It carries out the reaction L-glutamyl-tRNA(Gln) + L-glutamine + ATP + H2O = L-glutaminyl-tRNA(Gln) + L-glutamate + ADP + phosphate + H(+). In terms of biological role, allows the formation of correctly charged Gln-tRNA(Gln) through the transamidation of misacylated Glu-tRNA(Gln) in the mitochondria. The reaction takes place in the presence of glutamine and ATP through an activated gamma-phospho-Glu-tRNA(Gln). This Ixodes scapularis (Black-legged tick) protein is Glutamyl-tRNA(Gln) amidotransferase subunit C, mitochondrial.